Consider the following 319-residue polypeptide: Tetrahydromethanopterin S-methyltransferase subunit H (319 aa).

It belongs to the MtrH family. In terms of assembly, the complex is composed of 8 subunits; MtrA, MtrB, MtrC, MtrD, MtrE, MtrF, MtrG and MtrH.

It carries out the reaction 5-methyl-5,6,7,8-tetrahydromethanopterin + coenzyme M + 2 Na(+)(in) = 5,6,7,8-tetrahydromethanopterin + methyl-coenzyme M + 2 Na(+)(out). The protein operates within one-carbon metabolism; methanogenesis from CO(2); methyl-coenzyme M from 5,10-methylene-5,6,7,8-tetrahydromethanopterin: step 2/2. In terms of biological role, part of a complex that catalyzes the formation of methyl-coenzyme M and tetrahydromethanopterin from coenzyme M and methyl-tetrahydromethanopterin. This is an energy-conserving, sodium-ion translocating step. MtrH catalyzes the transfer of the methyl group from methyl-tetrahydromethanopterin to the corrinoid prosthetic group of MtrA. The protein is Tetrahydromethanopterin S-methyltransferase subunit H of Methanococcus vannielii (strain ATCC 35089 / DSM 1224 / JCM 13029 / OCM 148 / SB).